A 384-amino-acid polypeptide reads, in one-letter code: Ubiquitin-like modifier-activating enzyme 5 (384 aa).

Positions 63, 84, 107, 130, and 164 each coordinate ATP. Cys-206 and Cys-209 together coordinate Zn(2+). Residue Cys-230 is the Glycyl thioester intermediate of the active site. Zn(2+)-binding residues include Cys-283 and Cys-288. The tract at residues 352–375 (EAPEKSSAEATQAATAPVDDTSLE) is disordered.

The protein belongs to the ubiquitin-activating E1 family. UBA5 subfamily.

In terms of biological role, E1-like enzyme which activates UFM1. The chain is Ubiquitin-like modifier-activating enzyme 5 from Drosophila persimilis (Fruit fly).